The chain runs to 65 residues: Large ribosomal subunit protein bL35 (65 aa).

It belongs to the bacterial ribosomal protein bL35 family.

The sequence is that of Large ribosomal subunit protein bL35 from Sorangium cellulosum (strain So ce56) (Polyangium cellulosum (strain So ce56)).